Here is a 130-residue protein sequence, read N- to C-terminus: Small ribosomal subunit protein uS11c (130 aa).

This sequence belongs to the universal ribosomal protein uS11 family. As to quaternary structure, part of the 30S ribosomal subunit.

The protein resides in the plastid. Its subcellular location is the chloroplast. The protein is Small ribosomal subunit protein uS11c of Trieres chinensis (Marine centric diatom).